The primary structure comprises 99 residues: SAGA-associated factor 11 (99 aa).

An SGF11-type zinc finger spans residues 71 to 92; that stretch reads FYCENCGREVSGNRFAAHLQRC.

The protein belongs to the SGF11 family. As to quaternary structure, component of the 1.8 MDa SAGA transcription coactivator-HAT complex. SAGA is built of 5 distinct domains with specialized functions. Within the SAGA complex, SUS1, SGF11, SGF73 and UBP8 form an additional subcomplex of SAGA called the DUB module (deubiquitination module). Interacts directly with SGF73, SUS1 and UBP8.

Its subcellular location is the nucleus. Functionally, functions as a component of the transcription regulatory histone acetylation (HAT) complex SAGA. At the promoters, SAGA is required for recruitment of the basal transcription machinery. It influences RNA polymerase II transcriptional activity through different activities such as TBP interaction and promoter selectivity, interaction with transcription activators, and chromatin modification through histone acetylation and deubiquitination. SAGA acetylates nucleosomal histone H3 to some extent (to form H3K9ac, H3K14ac, H3K18ac and H3K23ac). SAGA interacts with DNA via upstream activating sequences (UASs). Involved in transcriptional regulation of a subset of SAGA-regulated genes. Within the SAGA complex, participates in a subcomplex, that specifically deubiquitinates histones H2B. The protein is SAGA-associated factor 11 of Candida glabrata (strain ATCC 2001 / BCRC 20586 / JCM 3761 / NBRC 0622 / NRRL Y-65 / CBS 138) (Yeast).